The chain runs to 172 residues: uncharacterized protein (172 aa).

The N-acetyltransferase domain maps to 12 to 172 (IRLRCMEDRD…IAVYERKSYN (161 aa)).

This is an uncharacterized protein from Bacillus subtilis (strain 168).